A 226-amino-acid polypeptide reads, in one-letter code: EEF1A lysine methyltransferase 3 (226 aa).

S-adenosyl-L-methionine is bound by residues Trp57, 83–85, Asp104, Trp133, and Ala150; that span reads GAG.

This sequence belongs to the methyltransferase superfamily. METTL21 family. Interacts with members of the heat shock protein 70 and 90 families and of the TCP-1 chaperonin family, as well as with HSPD1, STIP1 and tubulin; at least some of these proteins may be methylation substrates.

The protein localises to the cytoplasm. Its subcellular location is the cytoskeleton. It localises to the microtubule organizing center. It is found in the centrosome. It catalyses the reaction L-lysyl-[protein] + 3 S-adenosyl-L-methionine = N(6),N(6),N(6)-trimethyl-L-lysyl-[protein] + 3 S-adenosyl-L-homocysteine + 3 H(+). The catalysed reaction is L-lysyl-[protein] + S-adenosyl-L-methionine = N(6)-methyl-L-lysyl-[protein] + S-adenosyl-L-homocysteine + H(+). It carries out the reaction N(6)-methyl-L-lysyl-[protein] + S-adenosyl-L-methionine = N(6),N(6)-dimethyl-L-lysyl-[protein] + S-adenosyl-L-homocysteine + H(+). The enzyme catalyses N(6),N(6)-dimethyl-L-lysyl-[protein] + S-adenosyl-L-methionine = N(6),N(6),N(6)-trimethyl-L-lysyl-[protein] + S-adenosyl-L-homocysteine + H(+). Functionally, protein-lysine methyltransferase that selectively mono-, di- and trimethylates 'Lys-165' of the translation elongation factors EEF1A1 and EEF1A2 in an aminoacyl-tRNA and GTP-dependent manner. EEF1A1 methylation by EEF1AKMT3 is dynamic as well as inducible by stress conditions, such as ER-stress, and plays a regulatory role on mRNA translation. The polypeptide is EEF1A lysine methyltransferase 3 (Homo sapiens (Human)).